We begin with the raw amino-acid sequence, 713 residues long: MMVSYKLLSLITLLFVAQCTTGLLKQDDYVVRPDLLPGISSIKDKALIPKMYAGHIPLNLQKTTDENENTDESDSNSNTNYFFWKFQHQSVESPNLIFWLNGGPGCSSMDGALVETGPFRVDKNGKLYPNEGSWHSRGDLVYIDQPIGTGLSTSAAIPNLLDDLKEVSDNFILFLENYFTIFPNDLDKDIIIAGESYAGQYIPFFAKAIKEYNQKISDNKKKINLRMLLIGNGWIDPITQSLSYLPFAIEKNLVGKDTPDFETLLKAHEKCQNKINSISEDDNSFSHEECESIINMLVSVTKDNSPNVKSNEVCINIYDFNLRDSFPACGANWPIDVSHVAKFFSTPGVIEALNLNAEEVPRWKECNYDVLNHLTNPVSKPSVRLLPELLESGIEIILFNGENDLVCNNKGITDMISKLTWNGATGFSDKVQKYEWLFRDLTKDTEEPAGTVTFDRNLTFISVYNASHMVAYDKSIVARGILDIYLDNVMLVEKETDSPDVLISTNEPTFSDIEEEELDGEKEDEKDGVTEGDGEKSDTDEGKDTDKGKDEKNDDDDDDDDDSDDDSDDDDDDDDDDDDDDDDDDDSDDDDDDDDDSDDNEKDDKSESETKTHPKAKIALLLLLFISVFGITGSQALRQRNFQFRRAPLTSNSFSSSSSPNDPSNWDSNDDFDFDIENDPLPSTNNKHKAAKKKKDYVSIPSDIDESFELAEI.

The signal sequence occupies residues Met1–Gly22. The Lumenal portion of the chain corresponds to Leu23–Ala616. Active-site residues include Ser196 and Asp404. N-linked (GlcNAc...) asparagine glycosylation is found at Asn457 and Asn465. His468 is a catalytic residue. The interval Asp500 to Thr612 is disordered. Over residues Asp512–Lys522 the composition is skewed to acidic residues. Residues Glu523 to Lys552 show a composition bias toward basic and acidic residues. Over residues Asn553–Glu601 the composition is skewed to acidic residues. Over residues Lys602–Thr612 the composition is skewed to basic and acidic residues. A helical membrane pass occupies residues Lys617 to Leu637. Residues Arg638–Ile713 lie on the Cytoplasmic side of the membrane. Residues Thr650–Asp696 form a disordered region. Positions Ser651–Asp667 are enriched in low complexity. Residues Ser668–Asn678 show a composition bias toward acidic residues. Over residues Asn686 to Lys695 the composition is skewed to basic residues.

It belongs to the peptidase S10 family.

The protein resides in the golgi apparatus. Its subcellular location is the trans-Golgi network membrane. The catalysed reaction is Preferential release of a C-terminal arginine or lysine residue.. Functionally, protease with a carboxypeptidase B-like function involved in the C-terminal processing of the lysine and arginine residues from protein precursors. Promotes cell fusion and is involved in the programmed cell death. The sequence is that of Pheromone-processing carboxypeptidase KEX1 (KEX1) from Vanderwaltozyma polyspora (strain ATCC 22028 / DSM 70294 / BCRC 21397 / CBS 2163 / NBRC 10782 / NRRL Y-8283 / UCD 57-17) (Kluyveromyces polysporus).